The following is a 340-amino-acid chain: Phenylalanine--tRNA ligase alpha subunit (340 aa).

Residue glutamate 258 coordinates Mg(2+).

It belongs to the class-II aminoacyl-tRNA synthetase family. Phe-tRNA synthetase alpha subunit type 1 subfamily. As to quaternary structure, tetramer of two alpha and two beta subunits. It depends on Mg(2+) as a cofactor.

Its subcellular location is the cytoplasm. It carries out the reaction tRNA(Phe) + L-phenylalanine + ATP = L-phenylalanyl-tRNA(Phe) + AMP + diphosphate + H(+). This Corynebacterium efficiens (strain DSM 44549 / YS-314 / AJ 12310 / JCM 11189 / NBRC 100395) protein is Phenylalanine--tRNA ligase alpha subunit.